Consider the following 309-residue polypeptide: Homoserine O-succinyltransferase (309 aa).

Residue C142 is the Acyl-thioester intermediate of the active site. Substrate-binding residues include K163 and S192. H235 (proton acceptor) is an active-site residue. Residue E237 is part of the active site. Residue R249 participates in substrate binding.

It belongs to the MetA family.

The protein resides in the cytoplasm. The enzyme catalyses L-homoserine + succinyl-CoA = O-succinyl-L-homoserine + CoA. It functions in the pathway amino-acid biosynthesis; L-methionine biosynthesis via de novo pathway; O-succinyl-L-homoserine from L-homoserine: step 1/1. Transfers a succinyl group from succinyl-CoA to L-homoserine, forming succinyl-L-homoserine. The protein is Homoserine O-succinyltransferase of Serratia proteamaculans (strain 568).